A 957-amino-acid polypeptide reads, in one-letter code: Glycine dehydrogenase (decarboxylating) (957 aa).

The residue at position 708 (Lys-708) is an N6-(pyridoxal phosphate)lysine.

It belongs to the GcvP family. In terms of assembly, the glycine cleavage system is composed of four proteins: P, T, L and H. Pyridoxal 5'-phosphate is required as a cofactor.

It carries out the reaction N(6)-[(R)-lipoyl]-L-lysyl-[glycine-cleavage complex H protein] + glycine + H(+) = N(6)-[(R)-S(8)-aminomethyldihydrolipoyl]-L-lysyl-[glycine-cleavage complex H protein] + CO2. In terms of biological role, the glycine cleavage system catalyzes the degradation of glycine. The P protein binds the alpha-amino group of glycine through its pyridoxal phosphate cofactor; CO(2) is released and the remaining methylamine moiety is then transferred to the lipoamide cofactor of the H protein. This chain is Glycine dehydrogenase (decarboxylating), found in Escherichia coli (strain SE11).